Here is a 160-residue protein sequence, read N- to C-terminus: Phosphopantetheine adenylyltransferase (160 aa).

Ser-9 is a binding site for substrate. ATP contacts are provided by residues 9-10 (SL) and His-17. 3 residues coordinate substrate: Lys-41, Leu-74, and Lys-88. ATP-binding positions include 89–91 (GIR), Glu-99, and 123–129 (YLHLSST).

This sequence belongs to the bacterial CoaD family. In terms of assembly, homohexamer. Requires Mg(2+) as cofactor.

The protein resides in the cytoplasm. The catalysed reaction is (R)-4'-phosphopantetheine + ATP + H(+) = 3'-dephospho-CoA + diphosphate. It participates in cofactor biosynthesis; coenzyme A biosynthesis; CoA from (R)-pantothenate: step 4/5. Its function is as follows. Reversibly transfers an adenylyl group from ATP to 4'-phosphopantetheine, yielding dephospho-CoA (dPCoA) and pyrophosphate. In Renibacterium salmoninarum (strain ATCC 33209 / DSM 20767 / JCM 11484 / NBRC 15589 / NCIMB 2235), this protein is Phosphopantetheine adenylyltransferase.